A 199-amino-acid polypeptide reads, in one-letter code: Large ribosomal subunit protein bL25 (199 aa).

The protein belongs to the bacterial ribosomal protein bL25 family. CTC subfamily. In terms of assembly, part of the 50S ribosomal subunit; part of the 5S rRNA/L5/L18/L25 subcomplex. Contacts the 5S rRNA. Binds to the 5S rRNA independently of L5 and L18.

Functionally, this is one of the proteins that binds to the 5S RNA in the ribosome where it forms part of the central protuberance. The sequence is that of Large ribosomal subunit protein bL25 from Pseudomonas fluorescens (strain ATCC BAA-477 / NRRL B-23932 / Pf-5).